A 547-amino-acid chain; its full sequence is Chaperonin GroEL (547 aa).

ATP contacts are provided by residues 30-33 (TLGP), lysine 51, 87-91 (DGTTT), glycine 415, 478-480 (NAA), and aspartate 494.

The protein belongs to the chaperonin (HSP60) family. Forms a cylinder of 14 subunits composed of two heptameric rings stacked back-to-back. Interacts with the co-chaperonin GroES.

It localises to the cytoplasm. It carries out the reaction ATP + H2O + a folded polypeptide = ADP + phosphate + an unfolded polypeptide.. Together with its co-chaperonin GroES, plays an essential role in assisting protein folding. The GroEL-GroES system forms a nano-cage that allows encapsulation of the non-native substrate proteins and provides a physical environment optimized to promote and accelerate protein folding. This chain is Chaperonin GroEL, found in Geobacter sp. (strain M21).